Reading from the N-terminus, the 258-residue chain is MVASRTSADGGMETSYGFRDVAEGEKQGLVNDVFHKVAKRYDIMNDVMSAGMHRVWKDALIAALNPRKDAGYKVLDVAGGTGDIAFRIIEASRRLAHATVLDINGSMLGVGQERAQKKGLSDNLTFVEANAEALPFEANQFDAYTIAFGIRNVPRIDVALSEAYRVLKRGGRLLVLEFSEVQMPLLDRFYDQWSFKAIPRFGKMITGEAEPYQYLVESIRKFPNQQDFAAMITKAGFSKVSFTNYTGGIAALHSGWKI.

S-adenosyl-L-methionine is bound by residues threonine 81, aspartate 102, and 130 to 131 (NA).

Belongs to the class I-like SAM-binding methyltransferase superfamily. MenG/UbiE family.

The enzyme catalyses a 2-demethylmenaquinol + S-adenosyl-L-methionine = a menaquinol + S-adenosyl-L-homocysteine + H(+). It carries out the reaction a 2-methoxy-6-(all-trans-polyprenyl)benzene-1,4-diol + S-adenosyl-L-methionine = a 5-methoxy-2-methyl-3-(all-trans-polyprenyl)benzene-1,4-diol + S-adenosyl-L-homocysteine + H(+). Its pathway is quinol/quinone metabolism; menaquinone biosynthesis; menaquinol from 1,4-dihydroxy-2-naphthoate: step 2/2. It participates in cofactor biosynthesis; ubiquinone biosynthesis. In terms of biological role, methyltransferase required for the conversion of demethylmenaquinol (DMKH2) to menaquinol (MKH2) and the conversion of 2-polyprenyl-6-methoxy-1,4-benzoquinol (DDMQH2) to 2-polyprenyl-3-methyl-6-methoxy-1,4-benzoquinol (DMQH2). The protein is Ubiquinone/menaquinone biosynthesis C-methyltransferase UbiE of Allorhizobium ampelinum (strain ATCC BAA-846 / DSM 112012 / S4) (Agrobacterium vitis (strain S4)).